The primary structure comprises 108 residues: Glutaredoxin-like protein YDR286C homolog (108 aa).

A disulfide bridge connects residues Cys-22 and Cys-25.

This sequence belongs to the glutaredoxin family. YDR286C subfamily.

This chain is Glutaredoxin-like protein YDR286C homolog, found in Dictyostelium discoideum (Social amoeba).